We begin with the raw amino-acid sequence, 655 residues long: Ubiquilin-3 (655 aa).

The region spanning 22–98 (IKVTVKTPKD…LVIKRQHRAM (77 aa)) is the Ubiquitin-like domain. Positions 102-124 (CPAASVPTQGPSPGSLPQPSSIY) are disordered. Residues 110-122 (QGPSPGSLPQPSS) show a composition bias toward low complexity. Residues 194–233 (NPHMQQLIQHNPEIGHILNNPEIMRQTLEFLRNPAMMQEM) form the STI1 domain. Disordered regions lie at residues 277-330 (PFAT…PDIR), 364-399 (ASAL…LPEE), and 412-447 (FLRY…LVSG). The span at 279–290 (ATATTDNATTTT) shows a compositional bias: low complexity. Positions 318 to 330 (GRQDGDQDAPDIR) are enriched in basic and acidic residues. Residues 377 to 395 (VNRVPPSSPSSQEPGSGQP) are compositionally biased toward low complexity. A compositionally biased stretch (polar residues) spans 432–441 (KSSTGHSTNL). The UBA domain maps to 609-655 (QLQPEAHFQVQLEQLRSMGFLNREANLQALIATGGDVDAAVEKLRQS).

As to expression, testis specific.

The polypeptide is Ubiquilin-3 (UBQLN3) (Homo sapiens (Human)).